Here is a 498-residue protein sequence, read N- to C-terminus: Cytochrome P450 monooxygenase 71 (498 aa).

A helical transmembrane segment spans residues 7–24 (YVFALLGILATLYFVRWS). Asn-425 carries an N-linked (GlcNAc...) asparagine glycan. Cys-440 serves as a coordination point for heme.

Belongs to the cytochrome P450 family. It depends on heme as a cofactor.

It is found in the membrane. It participates in secondary metabolite biosynthesis. Its function is as follows. Cytochrome P450 monooxygenase that is able to use dehydroabietic acid and testosterone as substrates for oxidation, suggesting that the natural substrate(s) may be structurally related to steroid compounds. The chain is Cytochrome P450 monooxygenase 71 from Postia placenta (strain ATCC 44394 / Madison 698-R) (Brown rot fungus).